The chain runs to 428 residues: Gamma-glutamyl phosphate reductase (428 aa).

The protein belongs to the gamma-glutamyl phosphate reductase family.

The protein resides in the cytoplasm. It catalyses the reaction L-glutamate 5-semialdehyde + phosphate + NADP(+) = L-glutamyl 5-phosphate + NADPH + H(+). It functions in the pathway amino-acid biosynthesis; L-proline biosynthesis; L-glutamate 5-semialdehyde from L-glutamate: step 2/2. Catalyzes the NADPH-dependent reduction of L-glutamate 5-phosphate into L-glutamate 5-semialdehyde and phosphate. The product spontaneously undergoes cyclization to form 1-pyrroline-5-carboxylate. This Mesorhizobium japonicum (strain LMG 29417 / CECT 9101 / MAFF 303099) (Mesorhizobium loti (strain MAFF 303099)) protein is Gamma-glutamyl phosphate reductase.